The chain runs to 477 residues: MSPQTETKASVGFKAGVKDYKLTYYTPDYETKDTDILAAFRVTPQPGVPPEEAGAAVAAESSTGTWTTVWTDGLTSLDRYKGRCYHIETVVGEENQYIAYVAYPLDLFEEGSVTNMFTSIVGNVFGFKALRALRLEDLRIPPSYSKTFQGPPHGIQVERDKLNKYGRPLLGCTIKPKLGLSAKNYGRAVYECLRGGLDFTKDDENVNSQPFMRWRDRFLFCAEAIYKAQAETGEIKGHYLNATAGTCEEMIKRAVCARELGVPIVMHDYLTGGFTANTSLAHYCRDNGLLLHIHRAMHAVIDRQKNHGMHFRVLAKALRMSGGDHIHAGTVVGKLEGEREMTLGFVDLLRDDFIEKDRSRGIFFTQDWVSMPGVIPVASGGIHVWHMPALTEIFGDDSVLQFGGGTLGHPWGNAPGAVANRVALEACVQARNEGRDLAREGNEIIREASKWSPELAAACEVWKEIKFEFDPVDKLDK.

The propeptide occupies 1–2; it reads MS. Residue P3 is modified to N-acetylproline. Residue K14 is modified to N6,N6,N6-trimethyllysine. The substrate site is built by N123 and T173. K175 serves as the catalytic Proton acceptor. K177 is a binding site for substrate. Mg(2+)-binding residues include K201, D203, and E204. The residue at position 201 (K201) is an N6-carboxylysine. The active-site Proton acceptor is the H294. Positions 295, 327, and 379 each coordinate substrate.

The protein belongs to the RuBisCO large chain family. Type I subfamily. Heterohexadecamer of 8 large chains and 8 small chains; disulfide-linked. The disulfide link is formed within the large subunit homodimers. Requires Mg(2+) as cofactor. The disulfide bond which can form in the large chain dimeric partners within the hexadecamer appears to be associated with oxidative stress and protein turnover.

It is found in the plastid. The protein resides in the chloroplast. It carries out the reaction 2 (2R)-3-phosphoglycerate + 2 H(+) = D-ribulose 1,5-bisphosphate + CO2 + H2O. It catalyses the reaction D-ribulose 1,5-bisphosphate + O2 = 2-phosphoglycolate + (2R)-3-phosphoglycerate + 2 H(+). RuBisCO catalyzes two reactions: the carboxylation of D-ribulose 1,5-bisphosphate, the primary event in carbon dioxide fixation, as well as the oxidative fragmentation of the pentose substrate in the photorespiration process. Both reactions occur simultaneously and in competition at the same active site. The chain is Ribulose bisphosphate carboxylase large chain from Hyophorbe lagenicaulis (Bottle palm).